The sequence spans 347 residues: Protein RecA (347 aa).

An ATP-binding site is contributed by 64-71 (GPESSGKT).

The protein belongs to the RecA family.

It localises to the cytoplasm. Functionally, can catalyze the hydrolysis of ATP in the presence of single-stranded DNA, the ATP-dependent uptake of single-stranded DNA by duplex DNA, and the ATP-dependent hybridization of homologous single-stranded DNAs. It interacts with LexA causing its activation and leading to its autocatalytic cleavage. The sequence is that of Protein RecA from Bartonella tribocorum (strain CIP 105476 / IBS 506).